The chain runs to 270 residues: 2-heptyl-3-hydroxy-4-quinolone dioxygenase AqdC2 (270 aa).

Residues 25–156 (PALVLLTGWG…KSARAGLAKS (132 aa)) enclose the AB hydrolase-1 domain. His99 lines the substrate pocket. Residue His248 is the Proton donor/acceptor of the active site.

This sequence belongs to the AB hydrolase superfamily.

The catalysed reaction is 2-heptyl-3-hydroxy-4(1H)-quinolone + O2 = N-octanoylanthranilate + CO + H(+). Its function is as follows. Involved in the degradation of the Pseudomonas aeruginosa quorum sensing signal molecules HHQ (2-heptyl-4-quinolone) and PQS (2-heptyl-3-hydroxy-4-quinolone) to anthranilic acid. Catalyzes the cleavage of PQS to form N-octanoylanthranilic acid and carbon monoxide. In Rhodococcus erythropolis (Arthrobacter picolinophilus), this protein is 2-heptyl-3-hydroxy-4-quinolone dioxygenase AqdC2.